A 489-amino-acid polypeptide reads, in one-letter code: GTPase Der (489 aa).

2 consecutive EngA-type G domains span residues 30–199 (PVVS…KDKP) and 227–403 (FRLA…SRSH). GTP contacts are provided by residues 36–43 (GRQNVGKS), 85–89 (DTPGL), 151–154 (NKAD), 233–240 (GKPNSGKS), 280–284 (DTAGI), and 345–348 (NKWD). Residues 404–488 (RKVSTSELNK…PIRLEFRSDR (85 aa)) form the KH-like domain.

It belongs to the TRAFAC class TrmE-Era-EngA-EngB-Septin-like GTPase superfamily. EngA (Der) GTPase family. As to quaternary structure, associates with the 50S ribosomal subunit.

In terms of biological role, GTPase that plays an essential role in the late steps of ribosome biogenesis. This Leptospira interrogans serogroup Icterohaemorrhagiae serovar copenhageni (strain Fiocruz L1-130) protein is GTPase Der.